The chain runs to 470 residues: MGYLSCNGESAVAICDTYNWNPRRRSKVPEKRHPPKLRVFNYDELAVATNGFSANNFLGKGSHGRVYKAVLDDGKLLAAVKRTTITTTVGNNNNNVSQVDNEIEILSRVRHRWMVNLIGYCVDHRRKTKLLVVEYMPNGTLHDQLHSRSSLDSRLSSWNRRIKHALQIAIAVHALHTAETQVIHRDIKSCNVLIDGDGNARLADFGLALIGNVDDERLKYTPPAGTLGYLDPSYLAPADLTAKSDVFSFGILLLEIISGREAIDLNYSPSCIVDWAVPLIKRGDYDAICDLKIKNRPYYAVIRKLAVMAARCVRSTAKKRPDMLEVVECLKTVRQLSPAWNKLRRRSEERSENVLAVEEEKEEIHVRIVRGGSRKNRKVSNVTTSVDDVYERLVPEETLPFRRRNFVLRSRSVGAKVGPDPYDGFGDETVVTMRLLIEKERPVTTAAMRLSKSRSVGIVRSHKTASRKRY.

The region spanning 52–333 (FSANNFLGKG…LEVVECLKTV (282 aa)) is the Protein kinase domain. ATP contacts are provided by residues 58–66 (LGKGSHGRV) and Lys-81. Asp-186 (proton acceptor) is an active-site residue. A phosphothreonine mark is found at Thr-221 and Thr-226. Position 234 is a phosphotyrosine (Tyr-234).

This sequence belongs to the protein kinase superfamily. Ser/Thr protein kinase family.

The catalysed reaction is L-seryl-[protein] + ATP = O-phospho-L-seryl-[protein] + ADP + H(+). The enzyme catalyses L-threonyl-[protein] + ATP = O-phospho-L-threonyl-[protein] + ADP + H(+). This Arabidopsis thaliana (Mouse-ear cress) protein is Serine/threonine-protein kinase-like protein At1g28390.